The sequence spans 133 residues: Large ribosomal subunit protein uL14 (133 aa).

This sequence belongs to the universal ribosomal protein uL14 family. As to quaternary structure, part of the 50S ribosomal subunit. Forms a cluster with proteins L3 and L19. In the 70S ribosome, L14 and L19 interact and together make contacts with the 16S rRNA in bridges B5 and B8.

Binds to 23S rRNA. Forms part of two intersubunit bridges in the 70S ribosome. The polypeptide is Large ribosomal subunit protein uL14 (Gloeobacter violaceus (strain ATCC 29082 / PCC 7421)).